Here is a 187-residue protein sequence, read N- to C-terminus: MLNKLIESLKNAPIIMKGDYPYFIHPLTDGVPELDPDIVREAVSGIIRIADLDVDKIVTIEAMGIPVATALSLAVNIPIVVVRKRSYGFPNEIVVDQQTGYSKGKLYINGIDKGDEVIVVDDVISTGGTALATLKALEKAGAIVKDFVTVIEKGDGAEKLRKMGYKIKSLVKIEVSKDGVKIVDHLR.

It belongs to the purine/pyrimidine phosphoribosyltransferase family. Archaeal HPRT subfamily. As to quaternary structure, homodimer.

It is found in the cytoplasm. The catalysed reaction is IMP + diphosphate = hypoxanthine + 5-phospho-alpha-D-ribose 1-diphosphate. It catalyses the reaction GMP + diphosphate = guanine + 5-phospho-alpha-D-ribose 1-diphosphate. Its pathway is purine metabolism; IMP biosynthesis via salvage pathway; IMP from hypoxanthine: step 1/1. In terms of biological role, catalyzes a salvage reaction resulting in the formation of IMP that is energically less costly than de novo synthesis. This chain is Hypoxanthine/guanine phosphoribosyltransferase, found in Ferroglobus placidus (strain DSM 10642 / AEDII12DO).